The sequence spans 945 residues: Glutamyl aminopeptidase (945 aa).

The Cytoplasmic segment spans residues 1–18 (MNFAEEEPSKKYCIKGKH). A helical; Signal-anchor for type II membrane protein transmembrane segment spans residues 19-39 (VAIICATVVAVGLIVGLSVGL). Residues 40–945 (TRSCEPGTTP…SISEWFTSMP (906 aa)) are Extracellular-facing. A disordered region spans residues 45–77 (PGTTPAPSNPPPHTSTALPPQDQNVCPDSDDES). N-linked (GlcNAc...) asparagine glycans are attached at residues Asn116 and Asn189. Residue Glu215 participates in substrate binding. N-linked (GlcNAc...) asparagine glycans are attached at residues Asn236 and Asn316. 349-353 (GAMEN) is a binding site for substrate. His385 provides a ligand contact to Zn(2+). The Proton acceptor role is filled by Glu386. Zn(2+) contacts are provided by His389 and Glu408. N-linked (GlcNAc...) asparagine glycans are attached at residues Asn546, Asn584, Asn601, Asn640, Asn669, Asn754, Asn766, and Asn792. Residue Arg878 coordinates substrate.

The protein belongs to the peptidase M1 family. Homodimer; disulfide-linked. Requires Zn(2+) as cofactor. In terms of tissue distribution, highest expression in kidney proximal tubules and ileum enterocytes. High expression also detected in liver and pituitary. Lower levels in heart, adrenal gland and brain. Not detected in aorta, lung or spleen. In heart, higher levels in ventricle than in atrium. Also expressed in glomerular mesangial cells.

It localises to the cell membrane. The enzyme catalyses Release of N-terminal glutamate (and to a lesser extent aspartate) from a peptide.. Substrate specificity is modulated by calcium which enhances the enzymatic activity for cleavage of acidic residues while reducing its activity with basic residues. Inhibited by aminopeptidase inhibitors amastatin and bestatin. Functionally, regulates central hypertension through its calcium-modulated preference to cleave N-terminal acidic residues from peptides such as angiotensin II. This chain is Glutamyl aminopeptidase (Enpep), found in Rattus norvegicus (Rat).